The following is a 358-amino-acid chain: Bi-functional coumaroyl CoA and feruloyl CoA ortho-hydroxylase F6H2-1-1 (358 aa).

Residues 207-308 enclose the Fe2OG dioxygenase domain; that stretch reads GSRRININYY…RISVPVFVNP (102 aa). Tyrosine 216 is a binding site for 2-oxoglutarate. The Fe cation site is built by histidine 231, aspartate 233, and histidine 289. Positions 299 and 301 each coordinate 2-oxoglutarate.

The protein belongs to the iron/ascorbate-dependent oxidoreductase family. The cofactor is L-ascorbate. Requires Fe(2+) as cofactor. In terms of tissue distribution, mostly expressed in underground stems and stems, and, at low levels, in tubers, leaves and petioles.

The enzyme catalyses (E)-4-coumaroyl-CoA + 2-oxoglutarate + O2 = (E)-2,4-dihydroxycinnamoyl-CoA + succinate + CO2. It catalyses the reaction (E)-feruloyl-CoA + 2-oxoglutarate + O2 = (E)-6-hydroxyferuloyl-CoA + succinate + CO2. The protein operates within phenylpropanoid metabolism. Functionally, 2-oxoglutarate (OG)- and Fe(II)-dependent dioxygenase (2OGD) involved in scopoletin and umbelliferone biosynthesis. Converts feruloyl CoA into 6'-hydroxyferuloyl CoA, and p-coumaroyl CoA into 2,4-dihydroxycinnamoyl-CoA, but has no activity with caffeoyl-CoA. The chain is Bi-functional coumaroyl CoA and feruloyl CoA ortho-hydroxylase F6H2-1-1 from Ipomoea batatas (Sweet potato).